Reading from the N-terminus, the 782-residue chain is Phosphoribosylformylglycinamidine synthase subunit PurL (782 aa).

H50 is a catalytic residue. Residues Y53 and K92 each contribute to the ATP site. E94 serves as a coordination point for Mg(2+). Residues 95-98 (SHNH) and R117 contribute to the substrate site. Catalysis depends on H96, which acts as the Proton acceptor. A Mg(2+)-binding site is contributed by D118. Residue Q241 participates in substrate binding. D269 is a binding site for Mg(2+). 313 to 315 (ESQ) contacts substrate. ATP is bound by residues D520 and G557. N558 contacts Mg(2+). S560 contributes to the substrate binding site.

This sequence belongs to the FGAMS family. Monomer. Part of the FGAM synthase complex composed of 1 PurL, 1 PurQ and 2 PurS subunits.

The protein localises to the cytoplasm. The enzyme catalyses N(2)-formyl-N(1)-(5-phospho-beta-D-ribosyl)glycinamide + L-glutamine + ATP + H2O = 2-formamido-N(1)-(5-O-phospho-beta-D-ribosyl)acetamidine + L-glutamate + ADP + phosphate + H(+). It participates in purine metabolism; IMP biosynthesis via de novo pathway; 5-amino-1-(5-phospho-D-ribosyl)imidazole from N(2)-formyl-N(1)-(5-phospho-D-ribosyl)glycinamide: step 1/2. Part of the phosphoribosylformylglycinamidine synthase complex involved in the purines biosynthetic pathway. Catalyzes the ATP-dependent conversion of formylglycinamide ribonucleotide (FGAR) and glutamine to yield formylglycinamidine ribonucleotide (FGAM) and glutamate. The FGAM synthase complex is composed of three subunits. PurQ produces an ammonia molecule by converting glutamine to glutamate. PurL transfers the ammonia molecule to FGAR to form FGAM in an ATP-dependent manner. PurS interacts with PurQ and PurL and is thought to assist in the transfer of the ammonia molecule from PurQ to PurL. The sequence is that of Phosphoribosylformylglycinamidine synthase subunit PurL from Cyanothece sp. (strain PCC 7425 / ATCC 29141).